The sequence spans 157 residues: Cyclic pyranopterin monophosphate synthase (157 aa).

Substrate is bound by residues 74–76 and 112–113; these read MCH and ME. Asp127 is an active-site residue.

Belongs to the MoaC family. As to quaternary structure, homohexamer; trimer of dimers.

The enzyme catalyses (8S)-3',8-cyclo-7,8-dihydroguanosine 5'-triphosphate = cyclic pyranopterin phosphate + diphosphate. The protein operates within cofactor biosynthesis; molybdopterin biosynthesis. In terms of biological role, catalyzes the conversion of (8S)-3',8-cyclo-7,8-dihydroguanosine 5'-triphosphate to cyclic pyranopterin monophosphate (cPMP). This is Cyclic pyranopterin monophosphate synthase from Syntrophomonas wolfei subsp. wolfei (strain DSM 2245B / Goettingen).